Here is a 595-residue protein sequence, read N- to C-terminus: Epsin-2 (595 aa).

Arg8, Lys11, Arg25, Asn30, Arg63, and His73 together coordinate a 1,2-diacyl-sn-glycero-3-phospho-(1D-myo-inositol-4,5-bisphosphate). Residues 12–144 (NIVNNYSEAE…KDEERLKVER (133 aa)) enclose the ENTH domain. The span at 164–183 (NQITFGRGSSQPNLSTSYSE) shows a compositional bias: polar residues. Disordered regions lie at residues 164–254 (NQIT…RLRR), 267–289 (SRRD…PGSH), 305–396 (SGPV…KPSS), and 423–469 (TSKK…PESF). Residue Arg170 is modified to Omega-N-methylarginine. Ser173, Ser192, and Ser195 each carry phosphoserine. Composition is skewed to polar residues over residues 197–216 (HGST…PQTS) and 235–245 (EQSSESVQTAR). 2 UIM domains span residues 218–237 (EEEL…AEQS) and 255–274 (GDDL…TVKV). Residues 306–337 (GPVTQKTEPWSAGASANQTNPWGGTVAPSNIT) are compositionally biased toward polar residues. Tandem repeats lie at residues 313-315 (EPW), 325-327 (NPW), 338-340 (DPW), and 352-354 (DPW). The segment at 313–389 (EPWSAGASAN…SNAGKTTDAW (77 aa)) is 6 X 3 AA repeats of [DE]-P-W. Polar residues predominate over residues 358–367 (TTASTQSVPK). Repeat 5 spans residues 370–372 (DPW). Positions 374–384 (ASQQPASNAGK) are enriched in polar residues. Repeat unit 6 spans residues 387–389 (DAW). Position 443 is a phosphoserine (Ser443). The span at 449-460 (SQSLTSASSKPS) shows a compositional bias: low complexity. Thr465 is subject to Phosphothreonine. A run of 2 repeats spans residues 494-496 (NPF) and 508-510 (NPF). Residues 494–593 (NPFLAPGAAA…AQSTGTTNPF (100 aa)) form a 3 X 3 AA repeats of N-P-F region. At Ser526 the chain carries Phosphoserine. Repeat unit 3 spans residues 591-593 (NPF).

It belongs to the epsin family. In terms of assembly, binds EPS15, AP-2 and clathrin. Interacts with UBQLN2. Interacts with ITSN1. Ubiquitinated.

It is found in the cytoplasm. Functionally, plays a role in the formation of clathrin-coated invaginations and endocytosis. The sequence is that of Epsin-2 (Epn2) from Mus musculus (Mouse).